Consider the following 252-residue polypeptide: Hydroxyacylglutathione hydrolase (252 aa).

Zn(2+) is bound by residues histidine 54, histidine 56, aspartate 58, histidine 59, histidine 111, aspartate 128, and histidine 166.

This sequence belongs to the metallo-beta-lactamase superfamily. Glyoxalase II family. As to quaternary structure, monomer. The cofactor is Zn(2+).

The catalysed reaction is an S-(2-hydroxyacyl)glutathione + H2O = a 2-hydroxy carboxylate + glutathione + H(+). The protein operates within secondary metabolite metabolism; methylglyoxal degradation; (R)-lactate from methylglyoxal: step 2/2. Functionally, thiolesterase that catalyzes the hydrolysis of S-D-lactoyl-glutathione to form glutathione and D-lactic acid. This is Hydroxyacylglutathione hydrolase from Aliivibrio fischeri (strain ATCC 700601 / ES114) (Vibrio fischeri).